Consider the following 246-residue polypeptide: uncharacterized protein (246 aa).

It belongs to the BtpA family.

This is an uncharacterized protein from Archaeoglobus fulgidus (strain ATCC 49558 / DSM 4304 / JCM 9628 / NBRC 100126 / VC-16).